We begin with the raw amino-acid sequence, 141 residues long: Putative inactive deoxyuridine 5'-triphosphate nucleotidohydrolase-like protein FLJ16323 (141 aa).

This sequence belongs to the dUTPase family.

The chain is Putative inactive deoxyuridine 5'-triphosphate nucleotidohydrolase-like protein FLJ16323 from Homo sapiens (Human).